A 461-amino-acid chain; its full sequence is Ornithine decarboxylase (461 aa).

Lysine 69 carries the post-translational modification N6-(pyridoxal phosphate)lysine. Pyridoxal 5'-phosphate contacts are provided by residues serine 200, glycine 237, and 274 to 277 (EPGR). Serine 303 carries the post-translational modification Phosphoserine; by CK2. 331–332 (YD) is a binding site for substrate. Cysteine 360 serves as the catalytic Proton donor; shared with dimeric partner. Position 360 is an S-nitrosocysteine (cysteine 360). Substrate is bound at residue aspartate 361. Residue tyrosine 389 participates in pyridoxal 5'-phosphate binding.

This sequence belongs to the Orn/Lys/Arg decarboxylase class-II family. In terms of assembly, homodimer. Only the dimer is catalytically active, as the active sites are constructed of residues from both monomers. Pyridoxal 5'-phosphate is required as a cofactor.

The enzyme catalyses L-ornithine + H(+) = putrescine + CO2. Its pathway is amine and polyamine biosynthesis; putrescine biosynthesis via L-ornithine pathway; putrescine from L-ornithine: step 1/1. With respect to regulation, inhibited by antizymes (AZs) OAZ1, OAZ2 and OAZ3 in response to polyamine levels. AZs inhibit the assembly of the functional homodimer by binding to ODC monomers. Additionally, OAZ1 targets ODC monomers for ubiquitin-independent proteolytic destruction by the 26S proteasome. Its function is as follows. Catalyzes the first and rate-limiting step of polyamine biosynthesis that converts ornithine into putrescine, which is the precursor for the polyamines, spermidine and spermine. Polyamines are essential for cell proliferation and are implicated in cellular processes, ranging from DNA replication to apoptosis. In Bos taurus (Bovine), this protein is Ornithine decarboxylase (ODC1).